The sequence spans 372 residues: Heat-inducible transcription repressor HrcA (372 aa).

The segment at tyrosine 300 to isoleucine 334 is disordered.

Belongs to the HrcA family.

Negative regulator of class I heat shock genes (grpE-dnaK-dnaJ and groELS operons). Prevents heat-shock induction of these operons. The protein is Heat-inducible transcription repressor HrcA of Bifidobacterium longum (strain DJO10A).